Here is a 604-residue protein sequence, read N- to C-terminus: Deuterosome assembly protein 1 (604 aa).

Coiled coils occupy residues 14 to 59 (CEAE…NAQT), 85 to 197 (MTQN…GKKQ), 226 to 278 (IIEK…ELQS), and 336 to 399 (QDQP…KQLK). S547 is modified (phosphoserine). The stretch at 558 to 601 (AAQHFLLEEEKRAKELEKLLNTHIDELQRHTEFTLNKYSKLKQN) forms a coiled coil.

This sequence belongs to the CEP63 family. As to quaternary structure, interacts with CEP152; the interaction is mutually exclusive with CEP63.

Its subcellular location is the cytoplasm. Its function is as follows. Key structural component of the deuterosome, a structure that promotes de novo centriole amplification in multiciliated cells. Deuterosome-mediated centriole amplification occurs in terminally differentiated multiciliated cells and can generate more than 100 centrioles. Probably sufficient for the specification and formation of the deuterosome inner core. Interacts with CEP152 and recruits PLK4 to activate centriole biogenesis. The polypeptide is Deuterosome assembly protein 1 (Homo sapiens (Human)).